Here is a 354-residue protein sequence, read N- to C-terminus: RNA 3'-terminal phosphate cyclase (354 aa).

Residues Gln100 and 290–293 (HMGD) each bind ATP. The Tele-AMP-histidine intermediate role is filled by His316.

This sequence belongs to the RNA 3'-terminal cyclase family. Type 1 subfamily.

It localises to the cytoplasm. It catalyses the reaction a 3'-end 3'-phospho-ribonucleotide-RNA + ATP = a 3'-end 2',3'-cyclophospho-ribonucleotide-RNA + AMP + diphosphate. Catalyzes the conversion of 3'-phosphate to a 2',3'-cyclic phosphodiester at the end of RNA. The mechanism of action of the enzyme occurs in 3 steps: (A) adenylation of the enzyme by ATP; (B) transfer of adenylate to an RNA-N3'P to produce RNA-N3'PP5'A; (C) and attack of the adjacent 2'-hydroxyl on the 3'-phosphorus in the diester linkage to produce the cyclic end product. The biological role of this enzyme is unknown but it is likely to function in some aspects of cellular RNA processing. The protein is RNA 3'-terminal phosphate cyclase of Caldivirga maquilingensis (strain ATCC 700844 / DSM 13496 / JCM 10307 / IC-167).